Consider the following 459-residue polypeptide: Bifunctional protein GlmU (459 aa).

Residues 1–229 are pyrophosphorylase; sequence MTNYAIILAA…FDESLGVNDR (229 aa). UDP-N-acetyl-alpha-D-glucosamine contacts are provided by residues 8–11, Lys22, Gln72, and 77–78; these read LAAG and GT. Asp102 contributes to the Mg(2+) binding site. Residues Gly139, Glu154, Asn169, and Asn227 each contribute to the UDP-N-acetyl-alpha-D-glucosamine site. Asn227 is a binding site for Mg(2+). The interval 230–250 is linker; it reads VALATAESVMRRRINQQHMVN. Residues 251-459 are N-acetyltransferase; it reads GVSFVNPHAT…KRLPHHPQNK (209 aa). UDP-N-acetyl-alpha-D-glucosamine is bound by residues Arg332 and Lys350. His362 acts as the Proton acceptor in catalysis. Residues Tyr365 and Asn376 each coordinate UDP-N-acetyl-alpha-D-glucosamine. Residues Ala379, 385-386, Ser404, Ala422, and Arg439 contribute to the acetyl-CoA site; that span reads NY.

The protein in the N-terminal section; belongs to the N-acetylglucosamine-1-phosphate uridyltransferase family. In the C-terminal section; belongs to the transferase hexapeptide repeat family. As to quaternary structure, homotrimer. Mg(2+) is required as a cofactor.

Its subcellular location is the cytoplasm. The catalysed reaction is alpha-D-glucosamine 1-phosphate + acetyl-CoA = N-acetyl-alpha-D-glucosamine 1-phosphate + CoA + H(+). It carries out the reaction N-acetyl-alpha-D-glucosamine 1-phosphate + UTP + H(+) = UDP-N-acetyl-alpha-D-glucosamine + diphosphate. Its pathway is nucleotide-sugar biosynthesis; UDP-N-acetyl-alpha-D-glucosamine biosynthesis; N-acetyl-alpha-D-glucosamine 1-phosphate from alpha-D-glucosamine 6-phosphate (route II): step 2/2. It participates in nucleotide-sugar biosynthesis; UDP-N-acetyl-alpha-D-glucosamine biosynthesis; UDP-N-acetyl-alpha-D-glucosamine from N-acetyl-alpha-D-glucosamine 1-phosphate: step 1/1. It functions in the pathway bacterial outer membrane biogenesis; LPS lipid A biosynthesis. Its function is as follows. Catalyzes the last two sequential reactions in the de novo biosynthetic pathway for UDP-N-acetylglucosamine (UDP-GlcNAc). The C-terminal domain catalyzes the transfer of acetyl group from acetyl coenzyme A to glucosamine-1-phosphate (GlcN-1-P) to produce N-acetylglucosamine-1-phosphate (GlcNAc-1-P), which is converted into UDP-GlcNAc by the transfer of uridine 5-monophosphate (from uridine 5-triphosphate), a reaction catalyzed by the N-terminal domain. This chain is Bifunctional protein GlmU, found in Streptococcus sanguinis (strain SK36).